We begin with the raw amino-acid sequence, 349 residues long: MAAAWGRFLSRAWLCRTAWQGCGRNYRAALCAELKRPLVIEEVTPRPVQPHEVRVNVHFCGINFADILACQGQYQERHQLPFTPGMEFSGMVLETGTDVSTVKEGDRVIGLPGFSGMAEECITDHKNLWQIPEKVSLREAAALPVSYGTAIFALEHRACTQPGETVLVTAAAGATGLAVIDVATNILQAKVIAAAGSDEKCQLAMQSGAQSSVNYSRGSLKEAVGKLVGSGGVNVVIDMVGGDIFLEALRSLAYEGRIVVVGFAGGTIASVPANLLLLKNVSAMGLYWGRYRQQNFPVFSRSLSSALQYCQEGRIQPHIGEVFELEEVNDAFLHVTQRKSTGKVLLSLK.

Lys35 is subject to N6-acetyllysine. N6-succinyllysine is present on Lys200.

Belongs to the zinc-containing alcohol dehydrogenase family. Quinone oxidoreductase subfamily.

The chain is Quinone oxidoreductase-like protein 2 from Bos taurus (Bovine).